The following is a 144-amino-acid chain: Large ribosomal subunit protein uL16 (144 aa).

The segment covering M1–G19 has biased composition (basic residues). The segment at M1–G23 is disordered.

It belongs to the universal ribosomal protein uL16 family. As to quaternary structure, part of the 50S ribosomal subunit.

In terms of biological role, binds 23S rRNA and is also seen to make contacts with the A and possibly P site tRNAs. This chain is Large ribosomal subunit protein uL16, found in Staphylococcus carnosus (strain TM300).